The primary structure comprises 186 residues: Probable nicotinate-nucleotide adenylyltransferase (186 aa).

Belongs to the NadD family.

It catalyses the reaction nicotinate beta-D-ribonucleotide + ATP + H(+) = deamido-NAD(+) + diphosphate. Its pathway is cofactor biosynthesis; NAD(+) biosynthesis; deamido-NAD(+) from nicotinate D-ribonucleotide: step 1/1. Functionally, catalyzes the reversible adenylation of nicotinate mononucleotide (NaMN) to nicotinic acid adenine dinucleotide (NaAD). The polypeptide is Probable nicotinate-nucleotide adenylyltransferase (Thermus thermophilus (strain ATCC 27634 / DSM 579 / HB8)).